The following is an 877-amino-acid chain: GTPase activating protein homolog 2 (877 aa).

In terms of domain architecture, F-BAR spans 14 to 285 (FKFTDNLWDG…SVEMIDITND (272 aa)). Residues 130 to 214 (QEGIKLKQDM…SNCDEEYREQ (85 aa)) adopt a coiled-coil conformation. Residues 374–560 (VSLDELMNRQ…TLIKQIPPPL (187 aa)) enclose the Rho-GAP domain. Disordered regions lie at residues 589–612 (DQLS…GSGS), 644–704 (LPPL…AEPT), and 749–800 (AATP…LAST). Composition is skewed to low complexity over residues 593-612 (NDDN…GSGS), 653-676 (SGSG…SPTT), and 749-779 (AATP…STST). Residues 780-800 (IKTSSPDRTTPLTSSPPLAST) show a composition bias toward polar residues.

Its subcellular location is the cytoplasm. The protein localises to the contractile vacuole. Rho GTPase-activating protein involved in the signal transduction pathway. Regulator of the contractile vacuole network as well as involved in driving vacuole emptying. The polypeptide is GTPase activating protein homolog 2 (mgp2) (Dictyostelium discoideum (Social amoeba)).